The primary structure comprises 39 residues: Photosystem II reaction center protein J (39 aa).

A helical transmembrane segment spans residues 9–29 (LWIIATFGGIAALTVVGLFIY).

The protein belongs to the PsbJ family. In terms of assembly, PSII is composed of 1 copy each of membrane proteins PsbA, PsbB, PsbC, PsbD, PsbE, PsbF, PsbH, PsbI, PsbJ, PsbK, PsbL, PsbM, PsbT, PsbX, PsbY, PsbZ, Psb30/Ycf12, at least 3 peripheral proteins of the oxygen-evolving complex and a large number of cofactors. It forms dimeric complexes.

Its subcellular location is the plastid. It localises to the chloroplast thylakoid membrane. In terms of biological role, one of the components of the core complex of photosystem II (PSII). PSII is a light-driven water:plastoquinone oxidoreductase that uses light energy to abstract electrons from H(2)O, generating O(2) and a proton gradient subsequently used for ATP formation. It consists of a core antenna complex that captures photons, and an electron transfer chain that converts photonic excitation into a charge separation. The chain is Photosystem II reaction center protein J from Guillardia theta (Cryptophyte).